Here is a 907-residue protein sequence, read N- to C-terminus: Protein translocase subunit SecA (907 aa).

ATP-binding positions include Gln87, 105 to 109 (GEGKT), and Asp510. Zn(2+) is bound by residues Cys892, Cys894, Cys903, and His904.

It belongs to the SecA family. Monomer and homodimer. Part of the essential Sec protein translocation apparatus which comprises SecA, SecYEG and auxiliary proteins SecDF-YajC and YidC. Requires Zn(2+) as cofactor.

It localises to the cell inner membrane. The protein resides in the cytoplasm. The enzyme catalyses ATP + H2O + cellular proteinSide 1 = ADP + phosphate + cellular proteinSide 2.. In terms of biological role, part of the Sec protein translocase complex. Interacts with the SecYEG preprotein conducting channel. Has a central role in coupling the hydrolysis of ATP to the transfer of proteins into and across the cell membrane, serving both as a receptor for the preprotein-SecB complex and as an ATP-driven molecular motor driving the stepwise translocation of polypeptide chains across the membrane. The polypeptide is Protein translocase subunit SecA (Acinetobacter baumannii (strain AB0057)).